The primary structure comprises 89 residues: Small ribosomal subunit protein uS15 (89 aa).

Positions 1–13 are enriched in basic and acidic residues; sequence MTISKERKEEVIS. A disordered region spans residues 1–24; that stretch reads MTISKERKEEVISEHGAAAGDTGS.

The protein belongs to the universal ribosomal protein uS15 family. In terms of assembly, part of the 30S ribosomal subunit. Forms a bridge to the 50S subunit in the 70S ribosome, contacting the 23S rRNA.

Its function is as follows. One of the primary rRNA binding proteins, it binds directly to 16S rRNA where it helps nucleate assembly of the platform of the 30S subunit by binding and bridging several RNA helices of the 16S rRNA. Functionally, forms an intersubunit bridge (bridge B4) with the 23S rRNA of the 50S subunit in the ribosome. This Rhodopirellula baltica (strain DSM 10527 / NCIMB 13988 / SH1) protein is Small ribosomal subunit protein uS15.